Reading from the N-terminus, the 131-residue chain is L-ectoine synthase (131 aa).

This sequence belongs to the ectoine synthase family.

It catalyses the reaction (2S)-4-acetamido-2-aminobutanoate = L-ectoine + H2O. It participates in amine and polyamine biosynthesis; ectoine biosynthesis; L-ectoine from L-aspartate 4-semialdehyde: step 3/3. In terms of biological role, catalyzes the circularization of gamma-N-acetyl-alpha,gamma-diaminobutyric acid (ADABA) to ectoine (1,4,5,6-tetrahydro-2-methyl-4-pyrimidine carboxylic acid), which is an excellent osmoprotectant. The protein is L-ectoine synthase of Bordetella bronchiseptica (strain ATCC BAA-588 / NCTC 13252 / RB50) (Alcaligenes bronchisepticus).